The chain runs to 147 residues: Allograft inflammatory factor 1 (147 aa).

N-acetylserine is present on serine 2. The residue at position 11 (lysine 11) is an N6-acetyllysine. A Phosphoserine modification is found at serine 39. EF-hand domains lie at 45–80 (SKLEGFKEKYMEFDLNGNGDIDIMSLKRMLEKLGVP) and 81–115 (KTHLELKKLIGEVSSGSGETFSYPDFLRMMLGKRS). Aspartate 58, asparagine 60, asparagine 62, aspartate 64, threonine 100, and aspartate 105 together coordinate Ca(2+). Residues 128–147 (AREKEKPTGPPAKKAISELP) are disordered.

In terms of assembly, homodimer (Potential). Monomer. Interacts with LCP1. Phosphorylated on serine residues.

The protein localises to the cytoplasm. Its subcellular location is the cytoskeleton. The protein resides in the cell projection. It localises to the ruffle membrane. It is found in the phagocytic cup. Functionally, actin-binding protein that enhances membrane ruffling and RAC activation. Enhances the actin-bundling activity of LCP1. Binds calcium. Plays a role in RAC signaling and in phagocytosis. May play a role in macrophage activation and function. Promotes the proliferation of vascular smooth muscle cells and of T-lymphocytes. Enhances lymphocyte migration. Plays a role in vascular inflammation. This Macaca mulatta (Rhesus macaque) protein is Allograft inflammatory factor 1 (AIF1).